A 602-amino-acid polypeptide reads, in one-letter code: MASNSTPKYNSNSLENSLRRSPGDGMNHEQNDEIPCLPGEALITDKDVIYMCPFYGPVKGRIHVTNYKLYFKGEEMEPLISFSVPLGVIARIEKMGGASSRGENSYGLDITCKDMRNLRFALKQEVHSRKQIFEDLTKYAFPLSHGLLLFAFQNEEKFPENGWAVYDAMTEFRRQGLPNGQWRITFINKNYELCDTYPPLLVVPYSASEEDLKKVAAFRSRNRIPVLSWLHPENQSAIMRCSQPLVGMSGKRNKDDERYLDIIRDTNGQTSKLTIYDARPNVNAVANKATGGGYESEDAYPNAELVFLDIHNIHVMRESLKKLKDIVYPNVEESHWLSSLESTHWLEHIKLVLTGAIQVADKVASGKSSVVVHCSDGWDRTAQLTSLAMLMLDSYYRTIVGFEVLVQKEWISFGHKFSSRIGHGDKNHADADRSPIFLQFIDCVWQMSKQFPTAFEFNEHFLITVLDHLYSCRFGTFLYNCENIRDKEKVREKTQSLWSLISSEKSKYTNPFYTKELNRVLYPVASMRHLELWVNYYIRWNPRIRQQQPNPVEQRYMELLALRDDYVRRLEELQITNSPKMNSSTTSPSSPSQIMPQVHTPF.

The interval 1 to 32 (MASNSTPKYNSNSLENSLRRSPGDGMNHEQND) is disordered. The span at 17 to 31 (SLRRSPGDGMNHEQN) shows a compositional bias: basic and acidic residues. A GRAM domain is found at 28–96 (HEQNDEIPCL…GVIARIEKMG (69 aa)). Positions 162 to 537 (GWAVYDAMTE…RHLELWVNYY (376 aa)) constitute a Myotubularin phosphatase domain. A 1,2-diacyl-sn-glycero-3-phospho-(1D-myo-inositol-3,5-bisphosphate) is bound by residues Asn287, Asn312, and Ile313. Residues Asn287, Asn312, and Ile313 each contribute to the a 1,2-diacyl-sn-glycero-3-phospho-(1D-myo-inositol-3-phosphate) site. Catalysis depends on Cys374, which acts as the Phosphocysteine intermediate. The a 1,2-diacyl-sn-glycero-3-phospho-(1D-myo-inositol-3,5-bisphosphate) site is built by Ser375, Asp376, Gly377, Trp378, Asp379, Arg380, Lys416, and Arg420. Residues Ser375, Asp376, Gly377, Trp378, Asp379, and Arg380 each coordinate a 1,2-diacyl-sn-glycero-3-phospho-(1D-myo-inositol-3-phosphate). Arg420 provides a ligand contact to a 1,2-diacyl-sn-glycero-3-phospho-(1D-myo-inositol-3-phosphate). The interval 574 to 602 (QITNSPKMNSSTTSPSSPSQIMPQVHTPF) is disordered. Residues 583-592 (SSTTSPSSPS) show a composition bias toward low complexity.

The protein belongs to the protein-tyrosine phosphatase family. Non-receptor class myotubularin subfamily.

It is found in the cytoplasm. Its subcellular location is the cell membrane. The protein resides in the cell projection. The protein localises to the filopodium. It localises to the ruffle. It is found in the late endosome. Its subcellular location is the myofibril. The protein resides in the sarcomere. The enzyme catalyses a 1,2-diacyl-sn-glycero-3-phospho-(1D-myo-inositol-3-phosphate) + H2O = a 1,2-diacyl-sn-glycero-3-phospho-(1D-myo-inositol) + phosphate. The catalysed reaction is a 1,2-diacyl-sn-glycero-3-phospho-(1D-myo-inositol-3,5-bisphosphate) + H2O = a 1,2-diacyl-sn-glycero-3-phospho-(1D-myo-inositol-5-phosphate) + phosphate. It catalyses the reaction 1,2-dioctanoyl-sn-glycero-3-phospho-(1-D-myo-inositol-3-phosphate) + H2O = 1,2-dioctanoyl-sn-glycero-3-phospho-(1D-myo-inositol) + phosphate. It carries out the reaction 1,2-dioctanoyl-sn-glycero-3-phospho-(1D-myo-inositol-3,5-bisphosphate) + H2O = 1,2-dioctanoyl-sn-glycero-3-phospho-(1D-myo-inositol-5-phosphate) + phosphate. The enzyme catalyses 1,2-dihexadecanoyl-sn-glycero-3-phospho-(1D-myo-inositol-3,5-phosphate) + H2O = 1,2-dihexadecanoyl-sn-glycero-3-phospho-(1D-myo-inositol-5-phosphate) + phosphate. Its function is as follows. Lipid phosphatase which dephosphorylates phosphatidylinositol 3-monophosphate (PI3P) and phosphatidylinositol 3,5-bisphosphate (PI(3,5)P2). This Xenopus tropicalis (Western clawed frog) protein is Myotubularin (mtm1).